Consider the following 95-residue polypeptide: MSAITRQDEDLLLALYVQPKASRDELVGLHGEELKLAITAPPVDGKANAHICKLLAKAFKVPKGKVSIERGELGRHKLVRIQAPEIIPDDFAQFL.

The protein belongs to the UPF0235 family.

In Shewanella amazonensis (strain ATCC BAA-1098 / SB2B), this protein is UPF0235 protein Sama_2480.